A 55-amino-acid polypeptide reads, in one-letter code: Large ribosomal subunit protein bL33 (55 aa).

The segment covering 1 to 11 has biased composition (basic and acidic residues); it reads MAKGSREKIKL. The interval 1 to 32 is disordered; sequence MAKGSREKIKLESSASTGHFYTTSKNKRTKPE. The segment covering 13 to 24 has biased composition (polar residues); that stretch reads SSASTGHFYTTS.

This sequence belongs to the bacterial ribosomal protein bL33 family.

In Polynucleobacter necessarius subsp. necessarius (strain STIR1), this protein is Large ribosomal subunit protein bL33.